The following is a 371-amino-acid chain: Deoxyhypusine synthase (371 aa).

NAD(+) contacts are provided by residues 112-116 (SNLVT), 138-140 (SAG), glutamate 144, and aspartate 245. Spermidine is bound at residue 143–144 (EE). Residue aspartate 250 coordinates spermidine. Residue glycine 291 coordinates NAD(+). Spermidine is bound at residue histidine 296. An NAD(+)-binding site is contributed by 316–317 (TG). Residues 322-324 (GSD) and 331-337 (EAVSWGK) contribute to the spermidine site. Lysine 337 acts as the Nucleophile in catalysis. 350 to 351 (EA) contacts NAD(+).

This sequence belongs to the deoxyhypusine synthase family. NAD(+) is required as a cofactor.

It carries out the reaction [eIF5A protein]-L-lysine + spermidine = [eIF5A protein]-deoxyhypusine + propane-1,3-diamine. It functions in the pathway protein modification; eIF5A hypusination. Its function is as follows. Catalyzes the NAD-dependent oxidative cleavage of spermidine and the subsequent transfer of the butylamine moiety of spermidine to the epsilon-amino group of a critical lysine residue of the eIF-5A precursor protein to form the intermediate deoxyhypusine residue. This is the first step of the post-translational modification of that lysine into an unusual amino acid residue named hypusine. Hypusination is unique to mature eIF-5A factor and is essential for its function. The chain is Deoxyhypusine synthase from Caenorhabditis elegans.